Reading from the N-terminus, the 279-residue chain is Genome polyprotein (279 aa).

The protein belongs to the potyviridae genome polyprotein family. Post-translationally, genome polyprotein of potyviruses undergoes post-translational proteolytic processing by the main proteinase NIa-pro resulting in the production of at least ten individual proteins. The P1 proteinase and the HC-pro cleave only their respective C-termini autocatalytically. 6K1 is essential for proper proteolytic separation of P3 from CI.

The protein localises to the virion. It carries out the reaction RNA(n) + a ribonucleoside 5'-triphosphate = RNA(n+1) + diphosphate. Its function is as follows. An RNA-dependent RNA polymerase that plays an essential role in the virus replication. Involved in aphid transmission, cell-to-cell and systemis movement, encapsidation of the viral RNA and in the regulation of viral RNA amplification. The sequence is that of Genome polyprotein from Solanum betaceum (Tamarillo).